The sequence spans 112 residues: UPF0060 membrane protein CMS0846 (112 aa).

4 helical membrane-spanning segments follow: residues 6–26, 32–52, 61–81, and 87–107; these read VILFALAAVAEIGGAWLIWQA, PFWWAGLGVMALGAYGFIATL, ILAAYGGVFVAGSLLWGTVVD, and RWDVIGAVVCLVGVAVIMAAP.

This sequence belongs to the UPF0060 family.

Its subcellular location is the cell membrane. In Clavibacter sepedonicus (Clavibacter michiganensis subsp. sepedonicus), this protein is UPF0060 membrane protein CMS0846.